The primary structure comprises 500 residues: MLINEEKERREKLNYIKKHGYNFPNDFKPKNNFSDLTQRYKDYTRDQLFSLKICVSVAGRMTNKRIMGKSSFFILKDFEGEIQLYIQENLFALNFYKQFVKKWDLGDILGAKGKLFKTRTGELSIHCTEIKLLTKALKPLPSKFHGLSDQETRYRQRYLDLISNRTLCSIFKIRSLIFINIRKYMLKKKFLEVETPMMQNIPGGASARPFITHHNTLEIDLYLRISPELYLKRLIVGGFNKIFEINKSFRNEGISTRHNPEFTMMEVYMAYSNYHDMMNFTEKLLMFLVKEIVGNSQVKHGTNIIDFKKKFFRCTLKEAILKYNPSIRLSDLNDEVKMNKIVKKLGINVKKKLNAGQLILEIFNKTVEKKLIQPTFILDYPVEVSPLSRRSDVNKNVVDRFELFISGYEIGNGFSELNDADDQKKRFLMQCKLSHNINNLNKISSFDKHILYDSDYITALEYGLPPTSGLGIGIDRLTMLLTNQKSIRDVIFFPILKPSV.

Glu-402 and Glu-409 together coordinate Mg(2+).

This sequence belongs to the class-II aminoacyl-tRNA synthetase family. Homodimer. Requires Mg(2+) as cofactor.

It localises to the cytoplasm. The catalysed reaction is tRNA(Lys) + L-lysine + ATP = L-lysyl-tRNA(Lys) + AMP + diphosphate. The chain is Lysine--tRNA ligase from Buchnera aphidicola subsp. Baizongia pistaciae (strain Bp).